The primary structure comprises 357 residues: Elongation factor Ts (357 aa).

Residues 82–85 (TDFV) form an involved in Mg(2+) ion dislocation from EF-Tu region.

This sequence belongs to the EF-Ts family.

Its subcellular location is the cytoplasm. Associates with the EF-Tu.GDP complex and induces the exchange of GDP to GTP. It remains bound to the aminoacyl-tRNA.EF-Tu.GTP complex up to the GTP hydrolysis stage on the ribosome. This Campylobacter jejuni subsp. doylei (strain ATCC BAA-1458 / RM4099 / 269.97) protein is Elongation factor Ts.